A 187-amino-acid polypeptide reads, in one-letter code: Putative manganese efflux pump MntP (187 aa).

6 helical membrane passes run 3–23, 35–55, 56–76, 107–127, 129–149, and 166–186; these read FYSLIFLSCALGMDAFAVSLC, HYLIVGIYFGGFQALMPTIGY, FIGITFASFIASIDHWIAFIL, LALAIATSIDALAVGVSFAFL, VNLLLAIFLIGIITFILCIIA, and LLGGLVLIILGVKILIEHLFF.

The protein belongs to the MntP (TC 9.B.29) family.

It is found in the cell inner membrane. Its function is as follows. Probably functions as a manganese efflux pump. The sequence is that of Putative manganese efflux pump MntP from Campylobacter jejuni subsp. doylei (strain ATCC BAA-1458 / RM4099 / 269.97).